Here is a 534-residue protein sequence, read N- to C-terminus: Cytokine-like nuclear factor N-PAC (534 aa).

Residues 8-66 (QGDLVWGKLGRYPPWPGKIVNPPKDLKKPRGKKCLFVKFFGTEDHAWIKVEQLKPYHAH) form the PWWP domain. 2 stretches are compositionally biased toward basic and acidic residues: residues 93–122 (AKAK…QTGE) and 138–157 (RSRD…DKDS). A disordered region spans residues 93-168 (AKAKEHAKEH…SPQPSSLKKL (76 aa)). The a.T hook DNA-binding region spans 144–156 (PRKRGRPPKDDKD). The interaction with histone H3 stretch occupies residues 190–193 (DSWL). A dehydrogenase domain region spans residues 242–534 (GNIIPTDKKI…MSAVYRAYIH (293 aa)). NAD(+) is bound by residues 252 to 266 (GFLG…IVSN), Thr343, and Lys486.

This sequence belongs to the HIBADH-related family. NP60 subfamily. In terms of assembly, homotetramere. Binds to mononucleosomes.

The protein resides in the nucleus. It is found in the chromosome. In terms of biological role, cytokine-like nuclear factor with chromatin gene reader activity involved in chromatin modification and regulation of gene expression. Acts as a nucleosome-destabilizing factor that is recruited to genes during transcriptional activation. Recognizes and binds histone H3 without a preference for specific epigenetic markers and also binds DNA. Interacts with KDM1B and promotes its histone demethylase activity by facilitating the capture of H3 tails, they form a multifunctional enzyme complex that modifies transcribed chromatin and facilitates Pol II transcription through nucleosomes. The sequence is that of Cytokine-like nuclear factor N-PAC (glyr1) from Xenopus tropicalis (Western clawed frog).